Here is a 146-residue protein sequence, read N- to C-terminus: Basic phospholipase A2 paradoxin-like alpha chain (146 aa).

Positions 1–27 (MHPAHLLVLLAVCVSLLGASDIPPLPL) are cleaved as a signal peptide. Intrachain disulfides connect C38/C99, C54/C145, C56/C72, C71/C126, C78/C119, C88/C112, and C106/C117. Y55, G57, and G59 together coordinate Ca(2+). H75 is an active-site residue. Residue D76 participates in Ca(2+) binding. Residue D120 is part of the active site.

The protein belongs to the phospholipase A2 family. Group I subfamily. D49 sub-subfamily. As to quaternary structure, heterotrimer of alpha, beta, and gamma chains; non-covalently linked. Ca(2+) serves as cofactor. As to expression, expressed by the venom gland.

It localises to the secreted. It catalyses the reaction a 1,2-diacyl-sn-glycero-3-phosphocholine + H2O = a 1-acyl-sn-glycero-3-phosphocholine + a fatty acid + H(+). Heterotrimer: Snake venom phospholipase A2 (PLA2) heterotrimer that acts as a potent presynaptic neurotoxin by blocking synaptic transmission and synaptic vesicle recycling. May act by binding in a calcium-dependent fashion to neurotonal pentraxin-1 (NPTX1) and neurotonal pentraxin-2 (NPTX2), but not to neuronal pentraxin receptor (NPTXR). Also binds to taipoxin-associated calcium binding protein 49 (RCN2), a protein localized in the lumen of endoplasmic reticulum. In terms of biological role, monomer (alpha chain): Snake venom phospholipase A2 (PLA2) alpha chain that possesses the same high enzymatic activity than the heterotrimer. PLA2 catalyzes the calcium-dependent hydrolysis of the 2-acyl groups in 3-sn-phosphoglycerides. This chain is Basic phospholipase A2 paradoxin-like alpha chain, found in Oxyuranus microlepidotus (Inland taipan).